We begin with the raw amino-acid sequence, 105 residues long: UPF0145 protein CPS_2458 (105 aa).

It belongs to the UPF0145 family.

In Colwellia psychrerythraea (strain 34H / ATCC BAA-681) (Vibrio psychroerythus), this protein is UPF0145 protein CPS_2458.